The primary structure comprises 687 residues: Pre-mRNA-splicing factor CLF1 (687 aa).

13 HAT repeats span residues 45-77 (EYQR…FEIE), 79-111 (HDMR…AELK), 113-145 (KCIN…VEES), 147-178 (NNVE…FEIR), 180-211 (KNWN…FENR), 213-247 (GNTE…AKLV), 251-283 (AHWE…LKAG), 300-332 (TISY…LISE), 337-369 (QIMQ…LWMR), 383-416 (LEEE…FLIR), 451-483 (KEFD…LEEN), 525-557 (QEFE…YQTS), and 629-661 (LDQE…YIFP).

This sequence belongs to the crooked-neck family. In terms of assembly, belongs to the NTC complex (or PRP19-associated complex), composed of at least CEF1, CLF1, ISY1, NTC20, SNT309, SYF1, SYF2, and PRP19. The NTC complex associates with the spliceosome after the release of the U1 and U4 snRNAs and forms the CWC spliceosome subcomplex (or CEF1-associated complex) reminiscent of a late-stage spliceosome composed also of the U2, U5 and U6 snRNAs and at least BUD13, BUD31, BRR2, CDC40, CUS1, CWC2, CWC15, CWC21, CWC22, CWC23, CWC24, CWC25, CWC27, ECM2, HSH155, IST3, LEA1, MSL1, PRP8, PRP9, PRP11, PRP21, PRP22, PRP45, PRP46, SLU7, SMB1, SMD1, SMD2, SMD3, SMX2, SMX3, SNU114, SPP2, RSE1 and YJU2. Interacts with CEF1, ISY1, MUD2, NTC20, PRP22, PRP40, PRP46, SYF1, SYF2, and the ORC2 subunit of the origin recognition complex.

The protein resides in the nucleus. Functionally, involved in pre-mRNA splicing and cell cycle progression. Required for the spliceosome assembly by promoting the functional integration of the U4/U6.U5 tri-snRNP particle into the U1-, U2-dependent pre-spliceosome. Also recruits PRP19 to the spliceosome, as a component of the NTC complex (or PRP19-associated complex). The association of the NTC complex to the spliceosome mediates conformational rearrangement or stabilizes the structure of the spliceosome after U4 snRNA dissociation, which leads to spliceosome maturation. Required for initiation of the DNA replication by binding the RNA replication origins, probably through its interaction with the origin recognition complex (ORC). The chain is Pre-mRNA-splicing factor CLF1 (CLF1) from Saccharomyces cerevisiae (strain ATCC 204508 / S288c) (Baker's yeast).